The chain runs to 407 residues: Probable tRNA sulfurtransferase (407 aa).

The 105-residue stretch at Asn-61–Val-165 folds into the THUMP domain. Residues Met-183 to Leu-184, His-208 to Phe-209, Arg-265, Gly-287, and Gln-296 each bind ATP.

The protein belongs to the ThiI family.

Its subcellular location is the cytoplasm. The enzyme catalyses [ThiI sulfur-carrier protein]-S-sulfanyl-L-cysteine + a uridine in tRNA + 2 reduced [2Fe-2S]-[ferredoxin] + ATP + H(+) = [ThiI sulfur-carrier protein]-L-cysteine + a 4-thiouridine in tRNA + 2 oxidized [2Fe-2S]-[ferredoxin] + AMP + diphosphate. It carries out the reaction [ThiS sulfur-carrier protein]-C-terminal Gly-Gly-AMP + S-sulfanyl-L-cysteinyl-[cysteine desulfurase] + AH2 = [ThiS sulfur-carrier protein]-C-terminal-Gly-aminoethanethioate + L-cysteinyl-[cysteine desulfurase] + A + AMP + 2 H(+). Its pathway is cofactor biosynthesis; thiamine diphosphate biosynthesis. Its function is as follows. Catalyzes the ATP-dependent transfer of a sulfur to tRNA to produce 4-thiouridine in position 8 of tRNAs, which functions as a near-UV photosensor. Also catalyzes the transfer of sulfur to the sulfur carrier protein ThiS, forming ThiS-thiocarboxylate. This is a step in the synthesis of thiazole, in the thiamine biosynthesis pathway. The sulfur is donated as persulfide by IscS. The polypeptide is Probable tRNA sulfurtransferase (Staphylococcus aureus (strain JH1)).